Reading from the N-terminus, the 137-residue chain is Large ribosomal subunit protein uL22c (137 aa).

The protein belongs to the universal ribosomal protein uL22 family. As to quaternary structure, part of the 50S ribosomal subunit.

The protein resides in the plastid. It localises to the chloroplast. Functionally, this protein binds specifically to 23S rRNA. The globular domain of the protein is located near the polypeptide exit tunnel on the outside of the subunit, while an extended beta-hairpin is found that lines the wall of the exit tunnel in the center of the 70S ribosome. This Oenothera argillicola (Appalachian evening primrose) protein is Large ribosomal subunit protein uL22c (rpl22).